Here is a 319-residue protein sequence, read N- to C-terminus: ATP-dependent 6-phosphofructokinase (319 aa).

Residue Gly11 coordinates ATP. ADP is bound at residue Arg21–Arg25. ATP contacts are provided by residues Arg72 to Cys73 and Gly102 to Ser105. Mg(2+) is bound at residue Asp103. Position 125 to 127 (Thr125 to Asp127) interacts with substrate. Catalysis depends on Asp127, which acts as the Proton acceptor. Arg154 serves as a coordination point for ADP. Substrate is bound by residues Arg162 and Met169–Arg171. ADP contacts are provided by residues Gly185–Glu187, Lys211, and Lys213–His215. Substrate is bound by residues Glu222, Arg243, and His249–Arg252.

Belongs to the phosphofructokinase type A (PFKA) family. ATP-dependent PFK group I subfamily. Prokaryotic clade 'B1' sub-subfamily. Homotetramer. Requires Mg(2+) as cofactor.

The protein localises to the cytoplasm. The catalysed reaction is beta-D-fructose 6-phosphate + ATP = beta-D-fructose 1,6-bisphosphate + ADP + H(+). It participates in carbohydrate degradation; glycolysis; D-glyceraldehyde 3-phosphate and glycerone phosphate from D-glucose: step 3/4. With respect to regulation, allosterically activated by ADP and other diphosphonucleosides, and allosterically inhibited by phosphoenolpyruvate. Functionally, catalyzes the phosphorylation of D-fructose 6-phosphate to fructose 1,6-bisphosphate by ATP, the first committing step of glycolysis. This Clostridium botulinum (strain 657 / Type Ba4) protein is ATP-dependent 6-phosphofructokinase.